The following is a 132-amino-acid chain: Small ribosomal subunit protein uS8 (132 aa).

Belongs to the universal ribosomal protein uS8 family. Part of the 30S ribosomal subunit. Contacts proteins S5 and S12.

In terms of biological role, one of the primary rRNA binding proteins, it binds directly to 16S rRNA central domain where it helps coordinate assembly of the platform of the 30S subunit. This Streptomyces griseus subsp. griseus (strain JCM 4626 / CBS 651.72 / NBRC 13350 / KCC S-0626 / ISP 5235) protein is Small ribosomal subunit protein uS8.